The sequence spans 396 residues: NADH-quinone oxidoreductase subunit D (396 aa).

It belongs to the complex I 49 kDa subunit family. In terms of assembly, NDH-1 is composed of 14 different subunits. Subunits NuoB, C, D, E, F, and G constitute the peripheral sector of the complex.

Its subcellular location is the cell inner membrane. The enzyme catalyses a quinone + NADH + 5 H(+)(in) = a quinol + NAD(+) + 4 H(+)(out). Functionally, NDH-1 shuttles electrons from NADH, via FMN and iron-sulfur (Fe-S) centers, to quinones in the respiratory chain. The immediate electron acceptor for the enzyme in this species is believed to be ubiquinone. Couples the redox reaction to proton translocation (for every two electrons transferred, four hydrogen ions are translocated across the cytoplasmic membrane), and thus conserves the redox energy in a proton gradient. This is NADH-quinone oxidoreductase subunit D from Brucella anthropi (strain ATCC 49188 / DSM 6882 / CCUG 24695 / JCM 21032 / LMG 3331 / NBRC 15819 / NCTC 12168 / Alc 37) (Ochrobactrum anthropi).